Reading from the N-terminus, the 326-residue chain is MSKTVKVAVTGAAGQIGYSLLFRIASGQMFGADTAVEIQMLELEAAIPAAKGVIMELEDCAFPLLQKVTVSSDLDTAFKEINWALLVGSVPRKAGMERGDLLKINGGIFVNQGKAIEKNAASDVRILVVGNPCNTNCLIAMNNAKGISQDRWFAMTKLDENRAKSQLASKAGVPVKEVTHLGIWGNHSATQYPDFYNTKISGKPVTDVISDHEWLKGDFIKNVQQRGAEIIKARGASSAASAANGVVDTVRGIITPTAPGDCFSAAVVSDGSYGAEKGLIFGFPLKSDGKKVEIIQGISLNDFAKEKFKITHEELVSERNEVKEML.

11 to 17 (GAAGQIG) is an NAD(+) binding site. R92 and R98 together coordinate substrate. Residues N105, Q112, and 129–131 (VGN) each bind NAD(+). Substrate-binding residues include N131 and R162. H187 (proton acceptor) is an active-site residue.

The protein belongs to the LDH/MDH superfamily. MDH type 2 family.

The enzyme catalyses (S)-malate + NAD(+) = oxaloacetate + NADH + H(+). Functionally, catalyzes the reversible oxidation of malate to oxaloacetate. This Leptospira interrogans serogroup Icterohaemorrhagiae serovar Lai (strain 56601) protein is Malate dehydrogenase.